A 208-amino-acid chain; its full sequence is Imidazoleglycerol-phosphate dehydratase (208 aa).

This sequence belongs to the imidazoleglycerol-phosphate dehydratase family.

It localises to the cytoplasm. The catalysed reaction is D-erythro-1-(imidazol-4-yl)glycerol 3-phosphate = 3-(imidazol-4-yl)-2-oxopropyl phosphate + H2O. Its pathway is amino-acid biosynthesis; L-histidine biosynthesis; L-histidine from 5-phospho-alpha-D-ribose 1-diphosphate: step 6/9. The chain is Imidazoleglycerol-phosphate dehydratase from Psychrobacter sp. (strain PRwf-1).